A 344-amino-acid chain; its full sequence is GTPase Obg (344 aa).

The region spanning 1–159 (MKFLDLCKVY…RTLWLRLKLI (159 aa)) is the Obg domain. Residues 126 to 146 (GNLHFKSSTNQAPRRSNPGQD) are disordered. The span at 130–144 (FKSSTNQAPRRSNPG) shows a compositional bias: polar residues. One can recognise an OBG-type G domain in the interval 160–327 (ADVGLLGLPN…VLRKLRGEIS (168 aa)). Residues 166-173 (GLPNAGKS), 191-195 (FTTLH), 212-215 (DIPG), 279-282 (NKID), and 308-310 (SGV) each bind GTP. Positions 173 and 193 each coordinate Mg(2+).

The protein belongs to the TRAFAC class OBG-HflX-like GTPase superfamily. OBG GTPase family. In terms of assembly, monomer. It depends on Mg(2+) as a cofactor.

The protein localises to the cytoplasm. Its function is as follows. An essential GTPase which binds GTP, GDP and possibly (p)ppGpp with moderate affinity, with high nucleotide exchange rates and a fairly low GTP hydrolysis rate. Plays a role in control of the cell cycle, stress response, ribosome biogenesis and in those bacteria that undergo differentiation, in morphogenesis control. In Roseobacter denitrificans (strain ATCC 33942 / OCh 114) (Erythrobacter sp. (strain OCh 114)), this protein is GTPase Obg.